The chain runs to 171 residues: MDRAQKQEAIEALKGVFADSGAVVVTHYLGLTVAEMTDLRGKLREQGAQLKVVKNTLAQKALDGSVGEAGDALFKGPVAIAFAPDPVSAAKVATQYAKDNDKFTVVGGLMGQQVLDQKGVSALATLPSLDQLRGKIIGLLQAPATKVAGVLQAPAGQLARVMGAYAAKDAA.

The protein belongs to the universal ribosomal protein uL10 family. In terms of assembly, part of the ribosomal stalk of the 50S ribosomal subunit. The N-terminus interacts with L11 and the large rRNA to form the base of the stalk. The C-terminus forms an elongated spine to which L12 dimers bind in a sequential fashion forming a multimeric L10(L12)X complex.

Forms part of the ribosomal stalk, playing a central role in the interaction of the ribosome with GTP-bound translation factors. The polypeptide is Large ribosomal subunit protein uL10 (Phenylobacterium zucineum (strain HLK1)).